Here is a 574-residue protein sequence, read N- to C-terminus: Pentatricopeptide repeat-containing protein At5g25630 (574 aa).

Basic and acidic residues predominate over residues 1 to 21; sequence MEDVNQEKKKVPPMSEPERST. The tract at residues 1–25 is disordered; sequence MEDVNQEKKKVPPMSEPERSTPIKT. 12 PPR repeats span residues 44–78, 79–113, 114–148, 149–183, 187–221, 222–258, 259–293, 294–328, 329–363, 364–394, 398–432, and 433–467; these read TVRS…GHRP, SLIS…GTKL, DSIF…GLNP, TTST…GNVD, NIRT…GVRP, DTVT…KAKP, NGRT…RVEA, NLVV…NVKA, DVIT…GVKP, DAHA…LIVE, NVVI…GVSP, and NIKT…GVKP.

It belongs to the PPR family. P subfamily.

This chain is Pentatricopeptide repeat-containing protein At5g25630, found in Arabidopsis thaliana (Mouse-ear cress).